Here is a 320-residue protein sequence, read N- to C-terminus: Glyoxylate/hydroxypyruvate reductase B (320 aa).

Active-site residues include arginine 233 and glutamate 262. The Proton donor role is filled by histidine 281.

Belongs to the D-isomer specific 2-hydroxyacid dehydrogenase family. GhrB subfamily. As to quaternary structure, homodimer.

The protein resides in the cytoplasm. It catalyses the reaction glycolate + NADP(+) = glyoxylate + NADPH + H(+). The catalysed reaction is (R)-glycerate + NAD(+) = 3-hydroxypyruvate + NADH + H(+). It carries out the reaction (R)-glycerate + NADP(+) = 3-hydroxypyruvate + NADPH + H(+). Functionally, catalyzes the NADPH-dependent reduction of glyoxylate and hydroxypyruvate into glycolate and glycerate, respectively. The chain is Glyoxylate/hydroxypyruvate reductase B from Pectobacterium atrosepticum (strain SCRI 1043 / ATCC BAA-672) (Erwinia carotovora subsp. atroseptica).